Reading from the N-terminus, the 162-residue chain is Interleukin-15 (162 aa).

The N-terminal stretch at 1-29 (MRILKPYLRSTSIQCYLCLLLNSHFLTEA) is a signal peptide. A propeptide spanning residues 30–48 (GIHVFILGCISAGLPKTEA) is cleaved from the precursor. 2 cysteine pairs are disulfide-bonded: Cys83-Cys133 and Cys90-Cys136. Residues Asn113, Asn121, and Asn127 are each glycosylated (N-linked (GlcNAc...) asparagine).

It belongs to the IL-15/IL-21 family.

It is found in the secreted. In terms of biological role, cytokine that plays a major role in the development of inflammatory and protective immune responses to microbial invaders and parasites by modulating immune cells of both the innate and adaptive immune systems. Stimulates the proliferation of natural killer cells, T-cells and B-cells and promotes the secretion of several cytokines. In monocytes, induces the production of IL8 and monocyte chemotactic protein 1/CCL2, two chemokines that attract neutrophils and monocytes respectively to sites of infection. Unlike most cytokines, which are secreted in soluble form, IL15 is expressed in association with its high affinity IL15RA on the surface of IL15-producing cells and delivers signals to target cells that express IL2RB and IL2RG receptor subunits. Binding to its receptor triggers the phosphorylation of JAK1 and JAK3 and the recruitment and subsequent phosphorylation of signal transducer and activator of transcription-3/STAT3 and STAT5. In mast cells, induces the rapid tyrosine phosphorylation of STAT6 and thereby controls mast cell survival and release of cytokines such as IL4. This chain is Interleukin-15 (IL15), found in Ovis aries (Sheep).